The primary structure comprises 44 residues: uncharacterized protein (44 aa).

The tract at residues 22 to 44 (LNSAPAFKSSQNTSTQAKPTFSN) is disordered.

This is an uncharacterized protein from Dictyostelium discoideum (Social amoeba).